We begin with the raw amino-acid sequence, 248 residues long: Triosephosphate isomerase (248 aa).

A substrate-binding site is contributed by 9-11 (NWK). His94 (electrophile) is an active-site residue. Catalysis depends on Glu166, which acts as the Proton acceptor. Substrate-binding positions include Gly172, Ser211, and 232 to 233 (GG).

Belongs to the triosephosphate isomerase family. In terms of assembly, homodimer.

It localises to the cytoplasm. It carries out the reaction D-glyceraldehyde 3-phosphate = dihydroxyacetone phosphate. It functions in the pathway carbohydrate biosynthesis; gluconeogenesis. It participates in carbohydrate degradation; glycolysis; D-glyceraldehyde 3-phosphate from glycerone phosphate: step 1/1. Its function is as follows. Involved in the gluconeogenesis. Catalyzes stereospecifically the conversion of dihydroxyacetone phosphate (DHAP) to D-glyceraldehyde-3-phosphate (G3P). This chain is Triosephosphate isomerase, found in Ruthia magnifica subsp. Calyptogena magnifica.